We begin with the raw amino-acid sequence, 638 residues long: Ubiquitin-like-specific protease 2 (638 aa).

Residues 1–12 are compositionally biased toward basic and acidic residues; sequence MRDSKDALDDKS. Disordered regions lie at residues 1–79 and 238–314; these read MRDS…PKHL and PQKT…TSND. The segment covering 238–249 has biased composition (polar residues); sequence PQKTVRSIVKQT. Positions 250–264 are enriched in low complexity; sequence SSPHSSKMPKHSLPS. Positions 267–314 are enriched in polar residues; it reads TPFNSNSGDSLLSRIKNSNQSSSERPTANNGAQEQNQSSSSAGNTSND. Catalysis depends on residues H440 and D494. T526 is subject to Phosphothreonine. The active site involves C544. Over residues 610–619 the composition is skewed to polar residues; sequence NERQSLSSGS. The disordered stretch occupies residues 610 to 638; the sequence is NERQSLSSGSNDEEDKENDDDLAILPITN. Acidic residues predominate over residues 620–631; sequence NDEEDKENDDDL.

Belongs to the peptidase C48 family.

The protein localises to the nucleus. In Schizosaccharomyces pombe (strain 972 / ATCC 24843) (Fission yeast), this protein is Ubiquitin-like-specific protease 2 (ulp2).